The sequence spans 763 residues: Phosphoglycerol transferase I (763 aa).

A run of 4 helical transmembrane segments spans residues 1-21 (MSELLSFALFLASVLIYAWKA), 26-46 (WWFAATLTVLGLFVVLNITLF), 77-97 (ILPGIGIVLGLTAVFGALGWI), and 108-128 (FGYSLLALLLALGSVDASPAF).

The protein belongs to the OpgB family.

The protein localises to the cell inner membrane. It carries out the reaction a phosphatidylglycerol + a membrane-derived-oligosaccharide D-glucose = a 1,2-diacyl-sn-glycerol + a membrane-derived-oligosaccharide 6-(glycerophospho)-D-glucose.. The protein operates within glycan metabolism; osmoregulated periplasmic glucan (OPG) biosynthesis. In terms of biological role, transfers a phosphoglycerol residue from phosphatidylglycerol to the membrane-bound nascent glucan backbones. This chain is Phosphoglycerol transferase I, found in Escherichia coli O139:H28 (strain E24377A / ETEC).